The primary structure comprises 179 residues: Isopentenyl-diphosphate Delta-isomerase (179 aa).

Mn(2+)-binding residues include H24 and H30. One can recognise a Nudix hydrolase domain in the interval 28-160 (LLHRAFSIFI…PEKFTVWFLT (133 aa)). C65 is a catalytic residue. H67 is a binding site for Mn(2+). E85 serves as a coordination point for Mg(2+). Mn(2+)-binding residues include E110 and E112. E112 is a catalytic residue.

Belongs to the IPP isomerase type 1 family. As to quaternary structure, homodimer. It depends on Mg(2+) as a cofactor. Mn(2+) serves as cofactor.

Its subcellular location is the cytoplasm. The enzyme catalyses isopentenyl diphosphate = dimethylallyl diphosphate. Its pathway is isoprenoid biosynthesis; dimethylallyl diphosphate biosynthesis; dimethylallyl diphosphate from isopentenyl diphosphate: step 1/1. Catalyzes the 1,3-allylic rearrangement of the homoallylic substrate isopentenyl (IPP) to its highly electrophilic allylic isomer, dimethylallyl diphosphate (DMAPP). The protein is Isopentenyl-diphosphate Delta-isomerase of Serratia proteamaculans (strain 568).